Here is an 863-residue protein sequence, read N- to C-terminus: Receptor-like protein 9DC3 (863 aa).

An N-terminal signal peptide occupies residues 1–21 (MGCVKLVFFMLYVFLFQLVSS). Topologically, residues 22-812 (SSLPHLCPED…EEDSPMISWQ (791 aa)) are extracellular. Residues 24–90 (LPHLCPEDQA…GVHCDETTGQ (67 aa)) are N-cap. 2 N-linked (GlcNAc...) asparagine glycosylation sites follow: N71 and N108. One copy of the LRR 1; degenerate repeat lies at 91–114 (VIALDLRCSQLQGKFHSNSSLFQL). 2 LRR repeats span residues 115–138 (SNLK…KFGE) and 140–163 (SDLT…ISHL). One copy of the LRR 4; degenerate repeat lies at 164 to 190 (SKLHVLLIGDQYGLSIVPHNFEPLLKN). N-linked (GlcNAc...) asparagine glycans are attached at residues N190, N203, and N211. 6 LRR repeats span residues 191-213 (LTQL…SNFS), 214-237 (SHLT…VFHL), 240-262 (LEFL…KWNS), 264-286 (ASLM…SFSH), 287-311 (LTSL…LWNL), and 312-336 (TNIE…IFEK). An N-linked (GlcNAc...) asparagine glycan is attached at N261. 2 N-linked (GlcNAc...) asparagine glycosylation sites follow: N299 and N310. The stretch at 337–357 (LKKLSLFRNDNLDGGLEFLSF) is one LRR 11; degenerate repeat. LRR repeat units lie at residues 358-382 (NTQL…ISGL), 383-406 (QNLE…IFSL), 408-428 (SLVE…EFKS), 429-452 (KTLS…LLNQ), 454-476 (NLQL…ICNL), 477-500 (KTLI…VVER), 502-524 (EYLS…TFSV), 525-549 (GNIL…LINC), 551-572 (YLAL…WLGH), 573-597 (LSQL…GNTN), 599-623 (FTRL…ILGN), 667-690 (LDSN…IIGD), 691-714 (LVGL…SFQN), 715-739 (LSVL…LASL), and 741-759 (FLEV…IPKG). N-linked (GlcNAc...) asparagine glycans are attached at residues N378, N396, and N416. N464 carries N-linked (GlcNAc...) asparagine glycosylation. N-linked (GlcNAc...) asparagine glycosylation occurs at N519. N-linked (GlcNAc...) asparagine glycosylation occurs at N563. 3 N-linked (GlcNAc...) asparagine glycosylation sites follow: N674, N698, and N714. N-linked (GlcNAc...) asparagine glycosylation is found at N746 and N767. Positions 760 to 812 (KQFDSFGNTSYQGNDGLCGFPLSKLCGGDDQVTTPAELDQEEEEEDSPMISWQ) are C-cap/acidic domain. The helical transmembrane segment at 813–833 (GVLVGYGCGLVIGLSVIYIMW) threads the bilayer. The Cytoplasmic portion of the chain corresponds to 834–863 (STQYPAWFSRMHLKLEQIVTTRMKKHKKRY).

This sequence belongs to the RLP family.

It localises to the cell membrane. Its function is as follows. Involved in plant defense. Confers resistance to the fungal pathogen C.fulvum through recognition of the AVR9 elicitor protein. The sequence is that of Receptor-like protein 9DC3 from Solanum pimpinellifolium (Currant tomato).